We begin with the raw amino-acid sequence, 140 residues long: Large ribosomal subunit protein uL16 (140 aa).

Over residues 1–14 (MLSPRRTKFRKQQR) the composition is skewed to basic residues. The tract at residues 1 to 22 (MLSPRRTKFRKQQRGRMEGAAT) is disordered.

Belongs to the universal ribosomal protein uL16 family. In terms of assembly, part of the 50S ribosomal subunit.

Its function is as follows. Binds 23S rRNA and is also seen to make contacts with the A and possibly P site tRNAs. The chain is Large ribosomal subunit protein uL16 from Cyanothece sp. (strain PCC 7425 / ATCC 29141).